We begin with the raw amino-acid sequence, 341 residues long: Heat-inducible transcription repressor HrcA (341 aa).

Belongs to the HrcA family.

Its function is as follows. Negative regulator of class I heat shock genes (grpE-dnaK-dnaJ and groELS operons). Prevents heat-shock induction of these operons. This chain is Heat-inducible transcription repressor HrcA, found in Corynebacterium jeikeium (strain K411).